Here is a 367-residue protein sequence, read N- to C-terminus: NADH-quinone oxidoreductase subunit D (367 aa).

It belongs to the complex I 49 kDa subunit family. As to quaternary structure, NDH-1 is composed of 14 different subunits. Subunits NuoB, C, D, E, F, and G constitute the peripheral sector of the complex.

The protein resides in the cell membrane. It carries out the reaction a quinone + NADH + 5 H(+)(in) = a quinol + NAD(+) + 4 H(+)(out). Functionally, NDH-1 shuttles electrons from NADH, via FMN and iron-sulfur (Fe-S) centers, to quinones in the respiratory chain. The immediate electron acceptor for the enzyme in this species is believed to be ubiquinone. Couples the redox reaction to proton translocation (for every two electrons transferred, four hydrogen ions are translocated across the cytoplasmic membrane), and thus conserves the redox energy in a proton gradient. The protein is NADH-quinone oxidoreductase subunit D of Dehalococcoides mccartyi (strain CBDB1).